We begin with the raw amino-acid sequence, 549 residues long: Plant intracellular Ras-group-related LRR protein 4 (549 aa).

Residues 119–140 (SPSSNGSVSSRPPLPPATTTAA) show a composition bias toward low complexity. The interval 119-167 (SPSSNGSVSSRPPLPPATTTAARSDSQSSLNFSERAPVRPKDMVSRDDS) is disordered. Positions 141–150 (RSDSQSSLNF) are enriched in polar residues. Over residues 154–167 (APVRPKDMVSRDDS) the composition is skewed to basic and acidic residues. Ser-167 is modified (phosphoserine). 11 LRR repeats span residues 245 to 268 (LSSLTSLDLSENHIVVLPNTIGGL), 269 to 291 (SSLTKLDLHSNRIGQLPESIGEL), 293 to 313 (NLVYLNLGSNQLSSLPSAFSR), 314 to 337 (LVRLEELDLSCNNLPILPESIGSL), 339 to 360 (SLKKLDVETNDIEEIPYSIGGC), 362 to 383 (SLIELRADYNKLKALPEAIGKI), 384 to 406 (TTLEILSVRYNNIRQLPTTMSSL), 407 to 430 (ASLKELDVSFNELESVPESLCFAT), 432 to 454 (LVKLNIGNNFADMVSLPRSIGNL), 455 to 476 (EMLEELDISNNQIRVLPDSFKM), and 478 to 500 (TKLRVFRAQENPLHIPPRDIAEK). A GVYW; degenerate motif is present at residues 501-508 (GPQAVVQY).

The protein belongs to the SHOC2 family. Widely expressed.

Its function is as follows. Leucine-rich repeat protein that likely mediates protein interactions, possibly in the context of signal transduction. The chain is Plant intracellular Ras-group-related LRR protein 4 (PIRL4) from Arabidopsis thaliana (Mouse-ear cress).